The chain runs to 190 residues: Probable chorismate pyruvate-lyase (190 aa).

Arg-77, Leu-115, and Glu-174 together coordinate substrate.

The protein belongs to the UbiC family.

It localises to the cytoplasm. It carries out the reaction chorismate = 4-hydroxybenzoate + pyruvate. It functions in the pathway cofactor biosynthesis; ubiquinone biosynthesis. Functionally, removes the pyruvyl group from chorismate, with concomitant aromatization of the ring, to provide 4-hydroxybenzoate (4HB) for the ubiquinone pathway. The sequence is that of Probable chorismate pyruvate-lyase from Shewanella sp. (strain MR-4).